A 411-amino-acid polypeptide reads, in one-letter code: Glycerol-3-phosphate dehydrogenase [NAD(+)] (411 aa).

NAD(+) contacts are provided by residues G71–G76, F103, and F159. Substrate is bound at residue K182. Residue A215 coordinates NAD(+). K275 acts as the Proton acceptor in catalysis. NAD(+)-binding residues include R340 and Q369. R340–N341 serves as a coordination point for substrate.

It belongs to the NAD-dependent glycerol-3-phosphate dehydrogenase family.

It catalyses the reaction sn-glycerol 3-phosphate + NAD(+) = dihydroxyacetone phosphate + NADH + H(+). This Lachancea thermotolerans (Yeast) protein is Glycerol-3-phosphate dehydrogenase [NAD(+)] (GPD).